Here is a 103-residue protein sequence, read N- to C-terminus: Signal recognition particle 19 kDa protein (103 aa).

This sequence belongs to the SRP19 family. In terms of assembly, part of the signal recognition particle protein translocation system, which is composed of SRP and FtsY. Archaeal SRP consists of a 7S RNA molecule of 300 nucleotides and two protein subunits: SRP54 and SRP19.

It is found in the cytoplasm. Involved in targeting and insertion of nascent membrane proteins into the cytoplasmic membrane. Binds directly to 7S RNA and mediates binding of the 54 kDa subunit of the SRP. This Hyperthermus butylicus (strain DSM 5456 / JCM 9403 / PLM1-5) protein is Signal recognition particle 19 kDa protein.